Reading from the N-terminus, the 259-residue chain is O-antigen export system permease protein RfbA (259 aa).

Transmembrane regions (helical) follow at residues 33-53, 73-95, 111-131, 142-162, 176-196, and 228-248; these read FGYL…YFIF, FPWQ…NAQI, VMME…FLFV, WGIP…SIIF, VSLG…SDMI, and EYIS…LAIF. An ABC transmembrane type-2 domain is found at 33–251; sequence FGYLWSIANP…IVGLAIFNKL (219 aa).

This sequence belongs to the ABC-2 integral membrane protein family.

The protein resides in the cell inner membrane. Its function is as follows. May form an ATP-driven O-antigen export apparatus, in association with RfbB. This chain is O-antigen export system permease protein RfbA (rfbA), found in Klebsiella pneumoniae.